Consider the following 239-residue polypeptide: 6-phosphogluconolactonase (239 aa).

The protein belongs to the glucosamine/galactosamine-6-phosphate isomerase family. 6-phosphogluconolactonase subfamily.

The catalysed reaction is 6-phospho-D-glucono-1,5-lactone + H2O = 6-phospho-D-gluconate + H(+). The protein operates within carbohydrate degradation; pentose phosphate pathway; D-ribulose 5-phosphate from D-glucose 6-phosphate (oxidative stage): step 2/3. Functionally, hydrolysis of 6-phosphogluconolactone to 6-phosphogluconate. This Xylella fastidiosa (strain 9a5c) protein is 6-phosphogluconolactonase (pgl).